Here is a 339-residue protein sequence, read N- to C-terminus: Ketol-acid reductoisomerase (NADP(+)) (339 aa).

Residues 1–182 form the KARI N-terminal Rossmann domain; sequence MKVYYDADCD…GGGRSGIIET (182 aa). NADP(+)-binding positions include 24 to 27, arginine 48, serine 51, serine 53, and 83 to 86; these read YGSQ and DEHQ. Residue histidine 108 is part of the active site. Glycine 134 lines the NADP(+) pocket. In terms of domain architecture, KARI C-terminal knotted spans 183-328; that stretch reads NFREECETDL…AKLRAMMPWI (146 aa). The Mg(2+) site is built by aspartate 191, glutamate 195, glutamate 227, and glutamate 231. Position 252 (serine 252) interacts with substrate.

Belongs to the ketol-acid reductoisomerase family. Requires Mg(2+) as cofactor.

The enzyme catalyses (2R)-2,3-dihydroxy-3-methylbutanoate + NADP(+) = (2S)-2-acetolactate + NADPH + H(+). The catalysed reaction is (2R,3R)-2,3-dihydroxy-3-methylpentanoate + NADP(+) = (S)-2-ethyl-2-hydroxy-3-oxobutanoate + NADPH + H(+). It participates in amino-acid biosynthesis; L-isoleucine biosynthesis; L-isoleucine from 2-oxobutanoate: step 2/4. It functions in the pathway amino-acid biosynthesis; L-valine biosynthesis; L-valine from pyruvate: step 2/4. In terms of biological role, involved in the biosynthesis of branched-chain amino acids (BCAA). Catalyzes an alkyl-migration followed by a ketol-acid reduction of (S)-2-acetolactate (S2AL) to yield (R)-2,3-dihydroxy-isovalerate. In the isomerase reaction, S2AL is rearranged via a Mg-dependent methyl migration to produce 3-hydroxy-3-methyl-2-ketobutyrate (HMKB). In the reductase reaction, this 2-ketoacid undergoes a metal-dependent reduction by NADPH to yield (R)-2,3-dihydroxy-isovalerate. This is Ketol-acid reductoisomerase (NADP(+)) from Novosphingobium aromaticivorans (strain ATCC 700278 / DSM 12444 / CCUG 56034 / CIP 105152 / NBRC 16084 / F199).